The chain runs to 135 residues: NNCPGDWLPMNGLCYKIFNELKAWEDAEMFCRKYKPGCHLASIHIYGESLEIAEYISDYHKGQAEVWIGLWDKKKDFSWEWTDRSCTDYLSWDKNQPDHYENKEFCVELVSLTGYRLWEDQVCESKNAFLCQCKF.

Cystine bridges form between C3–C14, C31–C131, C38–C133, and C106–C123. One can recognise a C-type lectin domain in the interval 10–132 (MNGLCYKIFN…CESKNAFLCQ (123 aa)). Residues Q96, D98, E104, and D120 each coordinate Ca(2+). Residues 96–98 (QPD) carry the Galactose-binding motif.

Belongs to the true venom lectin family. As to quaternary structure, homodimer; disulfide-linked. Expressed by the venom gland.

The protein resides in the secreted. Functionally, galactose-binding protein which recognizes specific carbohydrate structures and agglutinates a variety of animal cells by binding to cell-surface glycoproteins and glycolipids. Calcium-dependent lectin. Shows high hemagglutinating activity in the presence of human erythrocytes, which are agglutinated with a minimum hemagglutination concentration (MHC) of 2.5-0.35 ug/ml. Causes indirect nephrotoxicity. Causes reductions in perfusion pressures, renal vascular resistance, urinary flow, glomerular filtration rate, sodium, potassium and chloride tubular transport. Its effects may be caused by the release of inflammatory mediators. This is C-type lectin BPL from Bothrops pirajai (Piraja's lancehead).